The sequence spans 99 residues: Ubiquitin-related modifier 1 homolog (99 aa).

G99 is modified (1-thioglycine). G99 participates in a covalent cross-link: Glycyl lysine isopeptide (Gly-Lys) (interchain with K-? in acceptor proteins).

Belongs to the URM1 family. Interacts with cer. In terms of processing, C-terminal thiocarboxylation occurs in 2 steps, it is first acyl-adenylated (-COAMP) via the hesA/moeB/thiF part of the MOCS3 homolog, then thiocarboxylated (-COSH) via the rhodanese domain of the MOCS3 homolog.

The protein localises to the cytoplasm. Its pathway is tRNA modification; 5-methoxycarbonylmethyl-2-thiouridine-tRNA biosynthesis. Its function is as follows. Acts as a sulfur carrier required for 2-thiolation of mcm(5)S(2)U at tRNA wobble positions of cytosolic tRNA(Lys), tRNA(Glu) and tRNA(Gln). Serves as sulfur donor in tRNA 2-thiolation reaction by being thiocarboxylated (-COSH) at its C-terminus by MOCS3. The sulfur is then transferred to tRNA to form 2-thiolation of mcm(5)S(2)U. Also acts as a ubiquitin-like protein (UBL) that is covalently conjugated via an isopeptide bond to lysine residues of target proteins such as Prx2/Jafrac1, Ciao1, Eip71CD and GILT1. The thiocarboxylated form serves as substrate for conjugation and oxidative stress specifically induces the formation of UBL-protein conjugates. This Drosophila persimilis (Fruit fly) protein is Ubiquitin-related modifier 1 homolog.